The following is a 252-amino-acid chain: 5-oxoprolinase subunit A (252 aa).

Belongs to the LamB/PxpA family. Forms a complex composed of PxpA, PxpB and PxpC.

It catalyses the reaction 5-oxo-L-proline + ATP + 2 H2O = L-glutamate + ADP + phosphate + H(+). Functionally, catalyzes the cleavage of 5-oxoproline to form L-glutamate coupled to the hydrolysis of ATP to ADP and inorganic phosphate. The chain is 5-oxoprolinase subunit A from Staphylococcus epidermidis (strain ATCC 35984 / DSM 28319 / BCRC 17069 / CCUG 31568 / BM 3577 / RP62A).